Here is a 369-residue protein sequence, read N- to C-terminus: Pyruvate dehydrogenase E1 component subunit alpha (369 aa).

Heterodimer of an alpha and a beta chain. Requires thiamine diphosphate as cofactor.

It catalyses the reaction N(6)-[(R)-lipoyl]-L-lysyl-[protein] + pyruvate + H(+) = N(6)-[(R)-S(8)-acetyldihydrolipoyl]-L-lysyl-[protein] + CO2. The pyruvate dehydrogenase complex catalyzes the overall conversion of pyruvate to acetyl-CoA and CO(2). It contains multiple copies of three enzymatic components: pyruvate dehydrogenase (E1), dihydrolipoamide acetyltransferase (E2) and lipoamide dehydrogenase (E3). In Geobacillus stearothermophilus (Bacillus stearothermophilus), this protein is Pyruvate dehydrogenase E1 component subunit alpha (pdhA).